Consider the following 326-residue polypeptide: Glycerol-3-phosphate dehydrogenase [NAD(P)+] (326 aa).

Residues tryptophan 13, arginine 33, and lysine 107 each coordinate NADPH. Lysine 107, glycine 135, and serine 137 together coordinate sn-glycerol 3-phosphate. Alanine 139 provides a ligand contact to NADPH. Positions 190, 243, 253, 254, and 255 each coordinate sn-glycerol 3-phosphate. Residue lysine 190 is the Proton acceptor of the active site. Arginine 254 serves as a coordination point for NADPH. NADPH-binding residues include leucine 273 and glutamate 275.

The protein belongs to the NAD-dependent glycerol-3-phosphate dehydrogenase family.

The protein resides in the cytoplasm. It catalyses the reaction sn-glycerol 3-phosphate + NAD(+) = dihydroxyacetone phosphate + NADH + H(+). The catalysed reaction is sn-glycerol 3-phosphate + NADP(+) = dihydroxyacetone phosphate + NADPH + H(+). Its pathway is membrane lipid metabolism; glycerophospholipid metabolism. In terms of biological role, catalyzes the reduction of the glycolytic intermediate dihydroxyacetone phosphate (DHAP) to sn-glycerol 3-phosphate (G3P), the key precursor for phospholipid synthesis. This Brucella abortus (strain 2308) protein is Glycerol-3-phosphate dehydrogenase [NAD(P)+].